The sequence spans 319 residues: tRNA (guanine-N(7)-)-methyltransferase (319 aa).

Residues 1 to 44 (MSESPETPEPSPAQSPEAAPEQPQAARPVTPGSQASFGTYGGRP) are disordered. A compositionally biased stretch (low complexity) spans 14-26 (QSPEAAPEQPQAA). S-adenosyl-L-methionine-binding residues include Glu-103, Glu-128, Asn-155, and Asp-178. Asp-178 is a catalytic residue. Residues Lys-182 and Asp-214 each coordinate substrate. Positions 262 to 288 (APVKEGRAPVSTEHTGPNEGVDETGGW) are disordered. Substrate is bound at residue 298 to 301 (TSFE).

This sequence belongs to the class I-like SAM-binding methyltransferase superfamily. TrmB family.

The catalysed reaction is guanosine(46) in tRNA + S-adenosyl-L-methionine = N(7)-methylguanosine(46) in tRNA + S-adenosyl-L-homocysteine. It participates in tRNA modification; N(7)-methylguanine-tRNA biosynthesis. Its function is as follows. Catalyzes the formation of N(7)-methylguanine at position 46 (m7G46) in tRNA. This is tRNA (guanine-N(7)-)-methyltransferase from Arthrobacter sp. (strain FB24).